A 360-amino-acid chain; its full sequence is DNA replication and repair protein RecF (360 aa).

Position 30 to 37 (30 to 37 (GQNGSGKT)) interacts with ATP.

Belongs to the RecF family.

It localises to the cytoplasm. In terms of biological role, the RecF protein is involved in DNA metabolism; it is required for DNA replication and normal SOS inducibility. RecF binds preferentially to single-stranded, linear DNA. It also seems to bind ATP. The polypeptide is DNA replication and repair protein RecF (Shewanella baltica (strain OS155 / ATCC BAA-1091)).